Here is a 104-residue protein sequence, read N- to C-terminus: Fusaric acid biosynthesis protein 2 (104 aa).

The protein belongs to the YciI family.

It participates in mycotoxin biosynthesis. Functionally, part of the gene cluster that mediates the biosynthesis of fusaric acid, a mycotoxin with low to moderate toxicity to animals and humans, but with high phytotoxic properties. L-aspartate is suggested as fusaric acid amino acid precursor that is activated and further processed to O-acetyl-L-homoserine by cluster enzymes aspartate kinase FUB3 and homoserine O-acetyltransferase FUB5, as well as enzymes of the primary metabolism. The polyketide synthase (PKS) FUB1 generates the triketide trans-2-hexenal which is presumptively released by the hydrolase FUB4 and linked to the NRPS-bound amino acid precursor by NAD(P)-dependent dehydrogenase FUB6. FUB1, FUB4, and the non-canonical NRPS Fub8 may form an enzyme complex. Further processing of the NRPS-bound intermediate might be carried out by FUB6 and the sulfhydrylase FUB7, enabling a spontaneous electrocyclization to close the carbon backbone of fusaric acid. Dihydrofusaric acid is likely to be released via reduction by the thioester reductase (TR) domain of FUB8 whereupon the final oxidation to fusaric acid may (also) be performed by the FMN-dependent dehydrogenase FUB9. This chain is Fusaric acid biosynthesis protein 2, found in Gibberella moniliformis (strain M3125 / FGSC 7600) (Maize ear and stalk rot fungus).